Consider the following 481-residue polypeptide: MENDQFMCPTDIITGIVFIDGELAMLTLTADGELRWTEYGLRQYLSMKKDVLGFIVEGKQIRVKAVVEKEAGGICCGQFGGDFVRKDFVFEPLIDQNGWCYKLRQYLDSLGRPKRLLVFVNPFGGKKSAREIFVKEVKPLFEDADVQLEIQETKYQLHAKEFVKSMDVSKYDGIVCVSGDGILVEVVNGLLERADWRNALKLPIGMVPAGTGNGMIKSLLDTVGLRCCANSATISIIRGHKRSVDVATIAQGNTKFFSVLMLAWGLIADIDIESEKFRWMGSARIDFYALQRIICLRRYNGRILFLPAPGFEGYGQPASCSLYQEPHVSDKEVGYQGPETKFEDLEWREMKGPFVTIWLHNVPWGSENTLTAPAAKFSDGYLDLIVLKNCPKLVLLSLMRQTSSGTHVESPYIVYIKVKAFVLEPGALVDEPDKEGIIDSDGEVLARGKRTYKCDQKALMSYDKLQVTVDQGLATLFSPEY.

One can recognise a DAGKc domain in the interval 111–253; that stretch reads GRPKRLLVFV…VDVATIAQGN (143 aa). ATP-binding positions include 121–123 and T153; that span reads NPF. Residue 178–181 coordinates substrate; sequence SGDG. The active-site Proton donor/acceptor is D180. ATP-binding positions include E185 and 210–212; that span reads GTG. D271 contributes to the substrate binding site. ATP-binding positions include R278, R284, and 441–443; that span reads DGE.

Requires Mg(2+) as cofactor. Highly expressed in flowers and siliques and at lower levels in roots, leaves and stems.

The protein localises to the vacuole membrane. The catalysed reaction is a sphingoid base + ATP = a sphingoid 1-phosphate + ADP + H(+). Its activity is regulated as follows. Activated by phosphatidic acid (PA). Binding with PA stimulates the activity by promoting the binding of substrate to the catalytic site. Involved in the production of sphingolipid metabolites. Phosphorylates sphingosine and various l sphingoid long-chain base (LCB) products, such as phytosphingosine (PHS, 4-hydroxysphinganine), 4-hydroxy-8-sphingenine, 4,8-sphingadienine and D-erythro-dihydrosphingosine, but has a very few activity toward D,L-threo- dihydrosphingosine. Is required for abscisic acid (ABA) signaling that mediates stomatal closure, inhibition of seed germination and root elongation. May function upstream of PLDALPHA1 and phosphatidic acid (PA) in an amplification response to ABA that mediates stomatal closure. The polypeptide is Sphingosine kinase 2 (SPHK2) (Arabidopsis thaliana (Mouse-ear cress)).